Reading from the N-terminus, the 240-residue chain is Probable transcriptional regulatory protein MXAN_7062 (240 aa).

This sequence belongs to the TACO1 family.

The protein localises to the cytoplasm. The chain is Probable transcriptional regulatory protein MXAN_7062 from Myxococcus xanthus (strain DK1622).